The chain runs to 553 residues: Hydroxylamine reductase (553 aa).

Residues Cys3, Cys6, Cys18, and Cys25 each coordinate [2Fe-2S] cluster. Positions 249, 273, 317, 405, 433, 459, 493, and 495 each coordinate hybrid [4Fe-2O-2S] cluster. Cys405 carries the post-translational modification Cysteine persulfide.

The protein belongs to the HCP family. [2Fe-2S] cluster is required as a cofactor. Requires hybrid [4Fe-2O-2S] cluster as cofactor.

Its subcellular location is the cytoplasm. The enzyme catalyses A + NH4(+) + H2O = hydroxylamine + AH2 + H(+). Catalyzes the reduction of hydroxylamine to form NH(3) and H(2)O. This chain is Hydroxylamine reductase, found in Actinobacillus succinogenes (strain ATCC 55618 / DSM 22257 / CCUG 43843 / 130Z).